The sequence spans 310 residues: Small ribosomal subunit biogenesis GTPase RsgA 2 (310 aa).

The region spanning 77-238 is the CP-type G domain; it reads LSKQSHILAA…IIDTPGIKGF (162 aa). GTP is bound by residues 126-129 and 180-188; these read NKVD and GHSGVGKST. The Zn(2+) site is built by cysteine 262, cysteine 267, histidine 269, and cysteine 275.

This sequence belongs to the TRAFAC class YlqF/YawG GTPase family. RsgA subfamily. As to quaternary structure, monomer. Associates with 30S ribosomal subunit, binds 16S rRNA. Zn(2+) serves as cofactor.

Its subcellular location is the cytoplasm. Its function is as follows. One of several proteins that assist in the late maturation steps of the functional core of the 30S ribosomal subunit. Helps release RbfA from mature subunits. May play a role in the assembly of ribosomal proteins into the subunit. Circularly permuted GTPase that catalyzes slow GTP hydrolysis, GTPase activity is stimulated by the 30S ribosomal subunit. The protein is Small ribosomal subunit biogenesis GTPase RsgA 2 of Bacteroides thetaiotaomicron (strain ATCC 29148 / DSM 2079 / JCM 5827 / CCUG 10774 / NCTC 10582 / VPI-5482 / E50).